Here is a 637-residue protein sequence, read N- to C-terminus: Threonine--tRNA ligase (637 aa).

The TGS domain maps to 1 to 61; that stretch reads MLNITLPDGS…TEDSSVQIIT (61 aa). Positions 242–533 are catalytic; that stretch reads DHRKLGKQLD…LIENHAGSFP (292 aa). Zn(2+) is bound by residues cysteine 333, histidine 384, and histidine 510.

Belongs to the class-II aminoacyl-tRNA synthetase family. In terms of assembly, homodimer. Zn(2+) is required as a cofactor.

The protein localises to the cytoplasm. It catalyses the reaction tRNA(Thr) + L-threonine + ATP = L-threonyl-tRNA(Thr) + AMP + diphosphate + H(+). Functionally, catalyzes the attachment of threonine to tRNA(Thr) in a two-step reaction: L-threonine is first activated by ATP to form Thr-AMP and then transferred to the acceptor end of tRNA(Thr). Also edits incorrectly charged L-seryl-tRNA(Thr). The chain is Threonine--tRNA ligase from Neisseria meningitidis serogroup C (strain 053442).